The chain runs to 295 residues: Glycine--tRNA ligase alpha subunit (295 aa).

It belongs to the class-II aminoacyl-tRNA synthetase family. As to quaternary structure, tetramer of two alpha and two beta subunits.

It localises to the cytoplasm. It carries out the reaction tRNA(Gly) + glycine + ATP = glycyl-tRNA(Gly) + AMP + diphosphate. In Shouchella clausii (strain KSM-K16) (Alkalihalobacillus clausii), this protein is Glycine--tRNA ligase alpha subunit.